We begin with the raw amino-acid sequence, 434 residues long: Putative neutral sphingomyelinase (434 aa).

Glu-83 is a Mg(2+) binding site. Residue His-318 is the Proton acceptor of the active site. The next 2 membrane-spanning stretches (helical) occupy residues 366–388 (IFFFILAVICLILILGSLFFEVF) and 392–414 (FAVLRFALTVVGVFFVWQGLIGL).

The protein belongs to the neutral sphingomyelinase family.

Its subcellular location is the membrane. The catalysed reaction is an N-(acyl)-sphingosylphosphocholine + H2O = an N-acyl-sphingoid base + phosphocholine + H(+). It catalyses the reaction a sphingomyelin + H2O = phosphocholine + an N-acylsphing-4-enine + H(+). It carries out the reaction an N-acyl-15-methylhexadecasphing-4-enine-1-phosphocholine + H2O = an N-acyl-15-methylhexadecasphing-4-enine + phosphocholine + H(+). It participates in lipid metabolism; sphingolipid metabolism. In terms of biological role, catalyzes the hydrolysis of sphingomyelin producing a ceramide (N-acyl-sphingoid base) and a phosphocholine. C.elegans contain specific sphingoid bases, which are unique or different in structure compared to the sphingoid bases found in other animals. Two examples of these distinctive compounds are: 15-methylhexadecasphinganine and 15-methylhexadecasphing-4-enine. This Caenorhabditis elegans protein is Putative neutral sphingomyelinase.